We begin with the raw amino-acid sequence, 188 residues long: Crossover junction endodeoxyribonuclease RuvC (188 aa).

Residues Asp7, Glu68, and Asp141 contribute to the active site. Residues Asp7, Glu68, and Asp141 each coordinate Mg(2+).

It belongs to the RuvC family. As to quaternary structure, homodimer which binds Holliday junction (HJ) DNA. The HJ becomes 2-fold symmetrical on binding to RuvC with unstacked arms; it has a different conformation from HJ DNA in complex with RuvA. In the full resolvosome a probable DNA-RuvA(4)-RuvB(12)-RuvC(2) complex forms which resolves the HJ. It depends on Mg(2+) as a cofactor.

It is found in the cytoplasm. The catalysed reaction is Endonucleolytic cleavage at a junction such as a reciprocal single-stranded crossover between two homologous DNA duplexes (Holliday junction).. Its function is as follows. The RuvA-RuvB-RuvC complex processes Holliday junction (HJ) DNA during genetic recombination and DNA repair. Endonuclease that resolves HJ intermediates. Cleaves cruciform DNA by making single-stranded nicks across the HJ at symmetrical positions within the homologous arms, yielding a 5'-phosphate and a 3'-hydroxyl group; requires a central core of homology in the junction. The consensus cleavage sequence is 5'-(A/T)TT(C/G)-3'. Cleavage occurs on the 3'-side of the TT dinucleotide at the point of strand exchange. HJ branch migration catalyzed by RuvA-RuvB allows RuvC to scan DNA until it finds its consensus sequence, where it cleaves and resolves the cruciform DNA. This Mycobacterium tuberculosis (strain ATCC 25177 / H37Ra) protein is Crossover junction endodeoxyribonuclease RuvC.